Here is a 254-residue protein sequence, read N- to C-terminus: MIKMSDFLKDCFQKIGWEKDHVSFGDLPLFLKAMAYRFPFENRAVLAKENYKITKEELWRRLLKDQHGGLCYDLNGFLYFVLREAGFHVKLIRGTVYAGDQEGWALEGTHAAVWLSAENGDYLVDIGFGINLALQPIPLSGETVQSPVGSFRIKKEETEKGSYVLLMDKGEGWQIGYAFTLEESDLGDLDNMKDIIHSHEKSPFNKSLLASKLTPSGRMVMSERHFTIYENGGNIQKSDIGPSGFEEKLNTHFL.

Residue C71 is the Acyl-thioester intermediate of the active site. Catalysis depends on residues H110 and D125.

It belongs to the arylamine N-acetyltransferase family.

This is an uncharacterized protein from Bacillus subtilis (strain 168).